The following is a 257-amino-acid chain: Imidazole glycerol phosphate synthase subunit HisF (257 aa).

Active-site residues include D11 and D130.

The protein belongs to the HisA/HisF family. As to quaternary structure, heterodimer of HisH and HisF.

It is found in the cytoplasm. The catalysed reaction is 5-[(5-phospho-1-deoxy-D-ribulos-1-ylimino)methylamino]-1-(5-phospho-beta-D-ribosyl)imidazole-4-carboxamide + L-glutamine = D-erythro-1-(imidazol-4-yl)glycerol 3-phosphate + 5-amino-1-(5-phospho-beta-D-ribosyl)imidazole-4-carboxamide + L-glutamate + H(+). Its pathway is amino-acid biosynthesis; L-histidine biosynthesis; L-histidine from 5-phospho-alpha-D-ribose 1-diphosphate: step 5/9. In terms of biological role, IGPS catalyzes the conversion of PRFAR and glutamine to IGP, AICAR and glutamate. The HisF subunit catalyzes the cyclization activity that produces IGP and AICAR from PRFAR using the ammonia provided by the HisH subunit. The polypeptide is Imidazole glycerol phosphate synthase subunit HisF (Afipia carboxidovorans (strain ATCC 49405 / DSM 1227 / KCTC 32145 / OM5) (Oligotropha carboxidovorans)).